A 318-amino-acid polypeptide reads, in one-letter code: Olfactory receptor 2A2 (318 aa).

Over 1-24 (MEGNQTWITDITLLGFQVGPALAI) the chain is Extracellular. Asparagine 4 carries N-linked (GlcNAc...) asparagine glycosylation. The helical transmembrane segment at 25–48 (LLCGLFSVFYTLTLLGNGVIFGII) threads the bilayer. Residues 49-56 (CLDSKLHT) lie on the Cytoplasmic side of the membrane. Residues 57 to 78 (PMYFFLSHLAIIDMSYASNNVP) form a helical membrane-spanning segment. Residues 79–99 (KMLANLMNQKRTISFVPCIMQ) lie on the Extracellular side of the membrane. A helical transmembrane segment spans residues 100–119 (TFLYLAFAVTECLILVVMSY). Topologically, residues 120 to 138 (DRYVAICHPFQYTVIMSWR) are cytoplasmic. Residues 139–157 (VCTILVLTSWSCGFALSLV) traverse the membrane as a helical segment. The Extracellular segment spans residues 158–194 (HEILLLRLPFCGPRDVNHLFCEILSVLKLACADTWVN). A helical transmembrane segment spans residues 195-218 (QVVIFATCVFVLVGPLSLILVSYM). The Cytoplasmic portion of the chain corresponds to 219-235 (HILGAILKIQTKEGRIK). A helical membrane pass occupies residues 236–258 (AFSTCSSHLCVVGLFFGIAMVVY). Residues 259 to 271 (MVPDSNQREEQEK) lie on the Extracellular side of the membrane. The helical transmembrane segment at 272-291 (MLSLFHSVFNPMLNPLIYSL) threads the bilayer. Over 292-310 (RNAQLKGALHRALQRKRSM) the chain is Cytoplasmic.

The protein belongs to the G-protein coupled receptor 1 family.

Its subcellular location is the cell membrane. Odorant receptor. In Homo sapiens (Human), this protein is Olfactory receptor 2A2 (OR2A2).